We begin with the raw amino-acid sequence, 276 residues long: Protein FAM151B (276 aa).

This sequence belongs to the menorin family.

Functionally, essential for survival of retinal photoreceptor cells. The sequence is that of Protein FAM151B (FAM151B) from Homo sapiens (Human).